Reading from the N-terminus, the 662-residue chain is Bifunctional polymyxin resistance protein ArnA (662 aa).

Residues 1–307 form a formyltransferase ArnAFT region; sequence MTSKAVVFAY…ELGLVEGARL (307 aa). His-106 acts as the Proton donor; for formyltransferase activity in catalysis. (6R)-10-formyltetrahydrofolate contacts are provided by residues Arg-116 and 138–142; that span reads IERAD. Residues 316-662 form a dehydrogenase ArnADH region; sequence RRTRVLILGV…EALREREAQA (347 aa). NAD(+) contacts are provided by residues Asp-349 and 370–371; that span reads DI. Residues Ala-395, Tyr-400, and 434 to 435 each bind UDP-alpha-D-glucuronate; that span reads TS. Residue Glu-436 is the Proton acceptor; for decarboxylase activity of the active site. UDP-alpha-D-glucuronate is bound by residues Arg-462, Asn-493, 527–536, and Tyr-614; that span reads RLVDGGAQKR. Residue Arg-620 is the Proton donor; for decarboxylase activity of the active site.

The protein in the N-terminal section; belongs to the Fmt family. UDP-L-Ara4N formyltransferase subfamily. This sequence in the C-terminal section; belongs to the NAD(P)-dependent epimerase/dehydratase family. UDP-glucuronic acid decarboxylase subfamily. As to quaternary structure, homohexamer, formed by a dimer of trimers.

The catalysed reaction is UDP-alpha-D-glucuronate + NAD(+) = UDP-beta-L-threo-pentopyranos-4-ulose + CO2 + NADH. It catalyses the reaction UDP-4-amino-4-deoxy-beta-L-arabinose + (6R)-10-formyltetrahydrofolate = UDP-4-deoxy-4-formamido-beta-L-arabinose + (6S)-5,6,7,8-tetrahydrofolate + H(+). It functions in the pathway nucleotide-sugar biosynthesis; UDP-4-deoxy-4-formamido-beta-L-arabinose biosynthesis; UDP-4-deoxy-4-formamido-beta-L-arabinose from UDP-alpha-D-glucuronate: step 1/3. It participates in nucleotide-sugar biosynthesis; UDP-4-deoxy-4-formamido-beta-L-arabinose biosynthesis; UDP-4-deoxy-4-formamido-beta-L-arabinose from UDP-alpha-D-glucuronate: step 3/3. Its pathway is bacterial outer membrane biogenesis; lipopolysaccharide biosynthesis. Functionally, bifunctional enzyme that catalyzes the oxidative decarboxylation of UDP-glucuronic acid (UDP-GlcUA) to UDP-4-keto-arabinose (UDP-Ara4O) and the addition of a formyl group to UDP-4-amino-4-deoxy-L-arabinose (UDP-L-Ara4N) to form UDP-L-4-formamido-arabinose (UDP-L-Ara4FN). The modified arabinose is attached to lipid A and is required for resistance to polymyxin and cationic antimicrobial peptides. In Pseudomonas aeruginosa (strain LESB58), this protein is Bifunctional polymyxin resistance protein ArnA.